Here is a 354-residue protein sequence, read N- to C-terminus: Molybdenum import ATP-binding protein ModC (354 aa).

The 229-residue stretch at 1–229 (MLELDFEQQL…SALRLWLQKE (229 aa)) folds into the ABC transporter domain. 31 to 38 (GLSGAGKT) contacts ATP. The 66-residue stretch at 289 to 354 (GSSIRNILAV…IKSVSFHRQL (66 aa)) folds into the Mop domain.

This sequence belongs to the ABC transporter superfamily. Molybdate importer (TC 3.A.1.8) family. As to quaternary structure, the complex is composed of two ATP-binding proteins (ModC), two transmembrane proteins (ModB) and a solute-binding protein (ModA).

The protein resides in the cell inner membrane. The catalysed reaction is molybdate(out) + ATP + H2O = molybdate(in) + ADP + phosphate + H(+). In terms of biological role, part of the ABC transporter complex ModABC involved in molybdenum import. Responsible for energy coupling to the transport system. The polypeptide is Molybdenum import ATP-binding protein ModC (Photorhabdus laumondii subsp. laumondii (strain DSM 15139 / CIP 105565 / TT01) (Photorhabdus luminescens subsp. laumondii)).